The primary structure comprises 215 residues: Adenylate kinase (215 aa).

Residue 10 to 15 participates in ATP binding; that stretch reads GAGKGT. The NMP stretch occupies residues 30–60; that stretch reads STGDMLRAAIIKAGTEMGKQAKSVIDAGQLV. AMP contacts are provided by residues T31, R36, 58–60, 86–89, and Q93; these read QLV and GFPR. Positions 123-160 are LID; the sequence is GRRAHLPSGRTYHVTFNPSKVEGQDDVTGEPLVIREDD. Residues R124 and 133–134 contribute to the ATP site; that span reads TY. R157 and R168 together coordinate AMP. K201 is an ATP binding site.

It belongs to the adenylate kinase family. Monomer.

Its subcellular location is the cytoplasm. It carries out the reaction AMP + ATP = 2 ADP. The protein operates within purine metabolism; AMP biosynthesis via salvage pathway; AMP from ADP: step 1/1. In terms of biological role, catalyzes the reversible transfer of the terminal phosphate group between ATP and AMP. Plays an important role in cellular energy homeostasis and in adenine nucleotide metabolism. The protein is Adenylate kinase of Aliivibrio salmonicida (strain LFI1238) (Vibrio salmonicida (strain LFI1238)).